Here is a 196-residue protein sequence, read N- to C-terminus: ECF RNA polymerase sigma factor SigM (196 aa).

The segment at 39 to 105 is sigma-70 factor domain-2; the sequence is LFRRHHRQLH…ACLDRLRRAK (67 aa). The Polymerase core binding signature appears at 63–66; the sequence is DALQ. The segment at 130–181 is sigma-70 factor domain-4; that stretch reads AVQRALMRLPVEQRAAVVAVDMQGYSIADTARMLGVAEGTVKSRCARARARL. Residues 156–175 constitute a DNA-binding region (H-T-H motif); it reads IADTARMLGVAEGTVKSRCA.

This sequence belongs to the sigma-70 factor family. ECF subfamily. Interacts transiently with the RNA polymerase catalytic core formed by RpoA, RpoB, RpoC and RpoZ (2 alpha, 1 beta, 1 beta' and 1 omega subunit) to form the RNA polymerase holoenzyme that can initiate transcription. Interacts (via sigma-70 factor domain-4) with anti-sigma-M factor RsmA (AC L7N5D7).

In terms of biological role, sigma factors are initiation factors that promote the attachment of RNA polymerase to specific initiation sites and are then released. Extracytoplasmic function (ECF) sigma factors are held in an inactive form by an anti-sigma factor (RsaM, AC L7N5D7) until released by regulated intramembrane proteolysis. This sigma factor is required for the synthesis of surface or secreted molecules. The chain is ECF RNA polymerase sigma factor SigM (sigM) from Mycobacterium tuberculosis (strain ATCC 25618 / H37Rv).